The chain runs to 121 residues: UPF0102 protein BHWA1_02005 (121 aa).

It belongs to the UPF0102 family.

The chain is UPF0102 protein BHWA1_02005 from Brachyspira hyodysenteriae (strain ATCC 49526 / WA1).